The primary structure comprises 1035 residues: Retinoblastoma-related protein (1035 aa).

The tract at residues 403–426 is disordered; sequence ITSPLSPHRSPASHANGIPGSANS. The interval 431 to 632 is domain A; it reads TPVSTAMTTA…EKGSSLYNSL (202 aa). Residues 431–885 form a pocket region; that stretch reads TPVSTAMTTA…NEIFIPAAKP (455 aa). A spacer region spans residues 633 to 753; it reads TVARPALSAE…PGGGGETCAE (121 aa). 2 disordered regions span residues 674-697 and 721-748; these read PSLQ…PKRP and GNLK…GGGG. The domain B stretch occupies residues 754 to 885; it reads TGINVFFTKI…NEIFIPAAKP (132 aa).

The protein belongs to the retinoblastoma protein (RB) family.

It is found in the nucleus. In terms of biological role, regulator of biological processes that recruits a histone deacetylase to control gene transcription. May play a role in the entry into mitosis, negatively regulating the cell proliferation. Formation of stable complexes with geminiviridae replication-associated proteins may create a cellular environment which favors viral DNA replication. This Populus trichocarpa (Western balsam poplar) protein is Retinoblastoma-related protein (RBL901).